The chain runs to 138 residues: Acidic phospholipase A2 PePLA2 (138 aa).

An N-terminal signal peptide occupies residues 1-16 (MRTLWIMAVLLLGVEG). 7 disulfide bridges follow: cysteine 42-cysteine 131, cysteine 44-cysteine 60, cysteine 59-cysteine 110, cysteine 65-cysteine 138, cysteine 66-cysteine 103, cysteine 73-cysteine 97, and cysteine 91-cysteine 101. The Ca(2+) site is built by tyrosine 43, glycine 45, and glycine 47. The active site involves histidine 63. Aspartate 64 provides a ligand contact to Ca(2+). Aspartate 104 is a catalytic residue.

This sequence belongs to the phospholipase A2 family. Group II subfamily. D49 sub-subfamily. The cofactor is Ca(2+). In terms of tissue distribution, expressed by the venom gland.

It is found in the secreted. It carries out the reaction a 1,2-diacyl-sn-glycero-3-phosphocholine + H2O = a 1-acyl-sn-glycero-3-phosphocholine + a fatty acid + H(+). Its function is as follows. PLA2 catalyzes the calcium-dependent hydrolysis of the 2-acyl groups in 3-sn-phosphoglycerides. The protein is Acidic phospholipase A2 PePLA2 of Protobothrops elegans (Elegant pitviper).